The chain runs to 49 residues: Delta-actitoxin-Axm1a (49 aa).

Cystine bridges form between C4–C46, C6–C36, and C29–C47.

It belongs to the sea anemone sodium channel inhibitory toxin family. Type I subfamily.

It is found in the secreted. The protein localises to the nematocyst. Binds specifically to voltage-gated sodium channels (Nav) (site 3), thereby delaying their inactivation. This toxin retains the greatest capacity to discriminate between the cardiac (Nav1.5/SCN5A) and neuronal sodium channels (2.5 nM versus 120 nM, when electrophysiologically tested and 14 nM versus 400 nM, when tested by ion flux), whereas its paralog Anthopleurin-B has the highest affinity of all anemone toxins for the mammalian sodium channel. Its ability to differentiate between cardiac and skeletal channels appears to be associated with domain 4 of the channel. This toxin does not slow or inhibit closed-state inactivation of cardiac sodium channels, but selectively modifies inactivation from the open-state. It does not display phospholipid-binding activities, suggesting that the domain IV S3-S4 linker is located at the extracellular surface and not buried in the phospholipid bilayer. This is Delta-actitoxin-Axm1a from Anthopleura xanthogrammica (Giant green sea anemone).